The sequence spans 90 residues: Probable Fe(2+)-trafficking protein (90 aa).

It belongs to the Fe(2+)-trafficking protein family.

Its function is as follows. Could be a mediator in iron transactions between iron acquisition and iron-requiring processes, such as synthesis and/or repair of Fe-S clusters in biosynthetic enzymes. The protein is Probable Fe(2+)-trafficking protein of Haemophilus influenzae (strain PittEE).